Consider the following 1043-residue polypeptide: Beta-klotho (1043 aa).

Topologically, residues 1–994 (MKTGCAAGSP…ICSFLVEKKP (994 aa)) are extracellular. Glycosyl hydrolase-1 regions lie at residues 77 to 506 (LYDT…DNGF) and 515 to 965 (MKGR…SSGL). Asn-84, Asn-122, Asn-161, Asn-211, Asn-262, Asn-308, Asn-389, Asn-552, Asn-609, Asn-700, Asn-704, and Asn-837 each carry an N-linked (GlcNAc...) asparagine glycan. Residues 995–1015 (LIFFGCCFISTLAVLLSITVF) traverse the membrane as a helical segment. Topologically, residues 1016–1043 (HHQKRRKFQKARNLQNIPLKKGHSRVFS) are cytoplasmic.

Belongs to the glycosyl hydrolase 1 family. Klotho subfamily. In terms of assembly, interacts with FGF19; this interaction is direct. Interacts (via C-terminus) with FGF21; this interaction is direct. Interacts with FGFR1 and FGFR4. Present in liver, muscle and white adipose tissue, but not in kidney (at protein level). Expressed in liver and pancreas, and at lower levels in skin, stomach, skeletal muscle, small intestine and lung.

The protein resides in the cell membrane. Contributes to the transcriptional repression of cholesterol 7-alpha-hydroxylase (CYP7A1), the rate-limiting enzyme in bile acid synthesis. Probably inactive as a glycosidase. Increases the ability of FGFR1 and FGFR4 to bind FGF21. This Mus musculus (Mouse) protein is Beta-klotho (Klb).